The chain runs to 745 residues: Arf-GAP with coiled-coil, ANK repeat and PH domain-containing protein 1 (745 aa).

Residues 1-226 (MTVKLDFEEC…RKELGGQLHQ (226 aa)) form the BAR domain. The interval 1–382 (MTVKLDFEEC…RGLGQGSGHL (382 aa)) is required for formation of endosomal tubules when overexpressed with PIP5K1C. Residues 265–360 (GLVMEGHLFK…WVSAVQSSIA (96 aa)) enclose the PH domain. The region spanning 405–527 (GHVAAQVQSV…KFLTKLPEIR (123 aa)) is the Arf-GAP domain. Residues 405-745 (GHVAAQVQSV…SRRSHDLHTL (341 aa)) form a required for interaction with GULP1 region. Residues 420–443 (CCDCREPAPEWASINLGVTLCIQC) form a C4-type zinc finger. Tyr-485 is subject to 3'-nitrotyrosine. The interval 525–567 (EIRGRRGGRGPPRGHPPVPPKPGLIRPKPGSFRSKPEPPSEDL) is prevents interaction with ITGB1 when S-554 is not phosphorylated. Positions 525 to 569 (EIRGRRGGRGPPRGHPPVPPKPGLIRPKPGSFRSKPEPPSEDLQS) are disordered. Residues 537–546 (RGHPPVPPKP) are compositionally biased toward pro residues. Ser-555 carries the phosphoserine; by PKB modification. ANK repeat units follow at residues 607-640 (ENAT…NVNQ), 644-673 (QGRG…DLGV), and 677-707 (EGRD…EADA).

As to quaternary structure, banana-shaped homodimer laterally assembling into tetramers, the tetramers further pack helically onto the membrane. Interacts with GTP-bound ARF6. Interacts with third cytoplasmic loop of SLC2A4/GLUT4. Interacts with CLTC. Interacts with GULP1. Forms a complex with GDP-bound ARF6 and GULP1. Interacts with ITGB1; required for ITGB1 recycling. In terms of processing, phosphorylation at Ser-555 by PKB is required for interaction with ITGB1, export of ITGB1 from recycling endosomes to the cell surface and ITGB1-dependent cell migration.

It is found in the recycling endosome membrane. Its activity is regulated as follows. GAP activity stimulated by phosphatidylinositol 4,5-bisphosphate (PIP2) and phosphatidic acid. In terms of biological role, GTPase-activating protein (GAP) for ADP ribosylation factor 6 (ARF6) required for clathrin-dependent export of proteins from recycling endosomes to trans-Golgi network and cell surface. Required for regulated export of ITGB1 from recycling endosomes to the cell surface and ITGB1-dependent cell migration. The polypeptide is Arf-GAP with coiled-coil, ANK repeat and PH domain-containing protein 1 (ACAP1) (Bos taurus (Bovine)).